The following is a 61-amino-acid chain: Cytotoxin homolog 3 (61 aa).

Disulfide bonds link cysteine 3–cysteine 22, cysteine 15–cysteine 39, cysteine 43–cysteine 54, and cysteine 55–cysteine 60.

It belongs to the three-finger toxin family. Short-chain subfamily. Orphan group XV sub-subfamily. In terms of tissue distribution, expressed by the venom gland.

The protein localises to the secreted. It localises to the target cell membrane. Functionally, has low cytotoxic activity. In Naja melanoleuca (Forest cobra), this protein is Cytotoxin homolog 3.